The chain runs to 152 residues: Sec-independent protein translocase protein TatB (152 aa).

The chain crosses the membrane as a helical span at residues 1–21 (MFDVAPSELLLVAVVALVVIG). The span at 60–71 (EDMEKRWAEENA) shows a compositional bias: basic and acidic residues. The tract at residues 60 to 152 (EDMEKRWAEE…KEADQQEKQS (93 aa)) is disordered. Low complexity-rich tracts occupy residues 84-98 (TAST…PVSD) and 124-140 (AANH…STPA). The segment covering 141–152 (KPKEADQQEKQS) has biased composition (basic and acidic residues).

It belongs to the TatB family. As to quaternary structure, the Tat system comprises two distinct complexes: a TatABC complex, containing multiple copies of TatA, TatB and TatC subunits, and a separate TatA complex, containing only TatA subunits. Substrates initially bind to the TatABC complex, which probably triggers association of the separate TatA complex to form the active translocon.

It localises to the cell inner membrane. In terms of biological role, part of the twin-arginine translocation (Tat) system that transports large folded proteins containing a characteristic twin-arginine motif in their signal peptide across membranes. Together with TatC, TatB is part of a receptor directly interacting with Tat signal peptides. TatB may form an oligomeric binding site that transiently accommodates folded Tat precursor proteins before their translocation. The protein is Sec-independent protein translocase protein TatB of Zymomonas mobilis subsp. mobilis (strain ATCC 31821 / ZM4 / CP4).